A 632-amino-acid chain; its full sequence is 1-deoxy-D-xylulose-5-phosphate synthase (632 aa).

Thiamine diphosphate contacts are provided by residues H79 and 120-122 (GHA). D151 contacts Mg(2+). Thiamine diphosphate contacts are provided by residues 152–153 (GS), N180, F292, and E376. Mg(2+) is bound at residue N180.

This sequence belongs to the transketolase family. DXPS subfamily. In terms of assembly, homodimer. Requires Mg(2+) as cofactor. The cofactor is thiamine diphosphate.

It carries out the reaction D-glyceraldehyde 3-phosphate + pyruvate + H(+) = 1-deoxy-D-xylulose 5-phosphate + CO2. Its pathway is metabolic intermediate biosynthesis; 1-deoxy-D-xylulose 5-phosphate biosynthesis; 1-deoxy-D-xylulose 5-phosphate from D-glyceraldehyde 3-phosphate and pyruvate: step 1/1. Catalyzes the acyloin condensation reaction between C atoms 2 and 3 of pyruvate and glyceraldehyde 3-phosphate to yield 1-deoxy-D-xylulose-5-phosphate (DXP). This Azobacteroides pseudotrichonymphae genomovar. CFP2 protein is 1-deoxy-D-xylulose-5-phosphate synthase.